A 153-amino-acid polypeptide reads, in one-letter code: Peptide methionine sulfoxide reductase MsrA (153 aa).

Cys-10 is a catalytic residue.

This sequence belongs to the MsrA Met sulfoxide reductase family.

It carries out the reaction L-methionyl-[protein] + [thioredoxin]-disulfide + H2O = L-methionyl-(S)-S-oxide-[protein] + [thioredoxin]-dithiol. It catalyses the reaction [thioredoxin]-disulfide + L-methionine + H2O = L-methionine (S)-S-oxide + [thioredoxin]-dithiol. Functionally, has an important function as a repair enzyme for proteins that have been inactivated by oxidation. Catalyzes the reversible oxidation-reduction of methionine sulfoxide in proteins to methionine. The sequence is that of Peptide methionine sulfoxide reductase MsrA from Methanococcoides burtonii (strain DSM 6242 / NBRC 107633 / OCM 468 / ACE-M).